The sequence spans 145 residues: Neutral phospholipase A2 homolog taipoxin beta chain 1 (145 aa).

A signal peptide spans 1–27; sequence MHPAHLLVLLAVCVSLLGASDIPPLPL. Disulfide bonds link Cys-38–Cys-98, Cys-54–Cys-144, Cys-56–Cys-72, Cys-71–Cys-125, Cys-78–Cys-118, Cys-87–Cys-111, and Cys-105–Cys-116.

Belongs to the phospholipase A2 family. Group I subfamily. D49 sub-subfamily. Heterotrimer of alpha, beta, and gamma chains; non-covalently linked. Expressed by the venom gland.

Its subcellular location is the secreted. Its function is as follows. Heterotrimer: Snake venom phospholipase A2 (PLA2) heterotrimer that acts as a potent presynaptic neurotoxin by blocking synaptic transmission and synaptic vesicle recycling. May act by binding in a calcium-dependent fashion to neurotonal pentraxin-1 (NPTX1) and neurotonal pentraxin-2 (NPTX2), but not to neuronal pentraxin receptor (NPTXR). Also binds to taipoxin-associated calcium binding protein 49 (RCN2), a protein localized in the lumen of endoplasmic reticulum. Monomer (beta chain): Snake venom phospholipase A2 homolog that is neither toxic nor enzymatically active. Does not bind calcium. This Oxyuranus scutellatus scutellatus (Australian taipan) protein is Neutral phospholipase A2 homolog taipoxin beta chain 1.